A 252-amino-acid polypeptide reads, in one-letter code: DNA-directed RNA polymerase III subunit rpc8 (252 aa).

Residues 214–252 (WTNQSAGDDDENEEDGGENQDDEVAEDDGGEEPTIEEDE) are disordered. Residues 220-252 (GDDDENEEDGGENQDDEVAEDDGGEEPTIEEDE) show a composition bias toward acidic residues.

It belongs to the eukaryotic RPB7/RPC8 RNA polymerase subunit family. Component of the RNA polymerase III (Pol III) complex consisting of several subunits.

The protein resides in the nucleus. DNA-dependent RNA polymerase catalyzes the transcription of DNA into RNA using the four ribonucleoside triphosphates as substrates. This is DNA-directed RNA polymerase III subunit rpc8 (polr3h-1) from Dictyostelium discoideum (Social amoeba).